The sequence spans 132 residues: NLP effector protein 15 (132 aa).

The short motif at 1–9 is the Conserved undecapeptide motif I element; that stretch reads MYSWYFPKD. A Hepta-peptide GHRHDWE motif II motif is present at residues 16-22; the sequence is GHRHDWE.

It belongs to the Necrosis inducing protein (NPP1) family.

Its subcellular location is the secreted. Functionally, secreted effector that contributes moderately to virulence during infection by P.capsici. Causes only small yellow areas at 3 days after inoculation of host C.annuum leaves; these areas expand somewhat and became necrotic at 7 days after inoculation. Leads only to chlorotic areas, without necrosis at 7 days after non-host N.benthamiana leaves infection. The polypeptide is NLP effector protein 15 (Phytophthora capsici).